The following is a 427-amino-acid chain: BRO1 domain-containing protein BROX homolog (427 aa).

A BRO1 domain is found at 1 to 427 (MSHWFHRNPI…PSNSSGCVIA (427 aa)).

This sequence belongs to the BROX family.

The protein is BRO1 domain-containing protein BROX homolog of Caenorhabditis elegans.